Here is a 132-residue protein sequence, read N- to C-terminus: Small ribosomal subunit protein uS8 (132 aa).

It belongs to the universal ribosomal protein uS8 family. As to quaternary structure, part of the 30S ribosomal subunit. Contacts proteins S5 and S12.

In terms of biological role, one of the primary rRNA binding proteins, it binds directly to 16S rRNA central domain where it helps coordinate assembly of the platform of the 30S subunit. This is Small ribosomal subunit protein uS8 from Psychrobacter cryohalolentis (strain ATCC BAA-1226 / DSM 17306 / VKM B-2378 / K5).